We begin with the raw amino-acid sequence, 406 residues long: Vitamin D3 dihydroxylase (406 aa).

A compositionally biased stretch (low complexity) spans 1 to 15; that stretch reads MTDTATTPQTTDAPA. A disordered region spans residues 1-24; sequence MTDTATTPQTTDAPAFPSNRSCPY. T81 is a calciol binding site. The heme site is built by H103 and R107. Positions 193, 236, and 293 each coordinate calciol. Residues R297, H353, and C355 each contribute to the heme site.

This sequence belongs to the cytochrome P450 family. Heme serves as cofactor.

Its subcellular location is the cytoplasm. The catalysed reaction is calciol + 2 reduced [2Fe-2S]-[ferredoxin] + O2 + 2 H(+) = calcidiol + 2 oxidized [2Fe-2S]-[ferredoxin] + H2O. It catalyses the reaction calcidiol + 2 reduced [2Fe-2S]-[ferredoxin] + O2 + 2 H(+) = calcitriol + 2 oxidized [2Fe-2S]-[ferredoxin] + H2O. In terms of biological role, involved in the metabolism of vitamin D3 (calciol) and of a number of sulfonylurea herbicides. Catalyzes the two-step hydroxylation (25- and 1-alpha-hydroxylation) of vitamin D3 (VD3) to yield its active form 1-alpha,25-dihydroxyvitamin D3 (calcitriol). The first step is the hydroxylation of the C-25 position of VD3 to produce 25-hydroxyvitamin D3 (calcidiol). The second reaction is the hydroxylation of the C1-alpha-position of calcidiol to produce calcitriol. It can also hydroxylate vitamin D2. This chain is Vitamin D3 dihydroxylase, found in Streptomyces griseolus.